The primary structure comprises 365 residues: G-protein coupled receptor 68 (365 aa).

The Extracellular portion of the chain corresponds to 1 to 12 (MGNITADNSSMS). N-linked (GlcNAc...) asparagine glycosylation is found at Asn3 and Asn8. A helical membrane pass occupies residues 13–49 (CTIDHTIHQTLAPVVYVTVLVVGFPANCLSLYFGYLQ). Intrachain disulfides connect Cys13–Cys258 and Cys94–Cys172. Over 50-53 (IKAR) the chain is Cytoplasmic. A helical membrane pass occupies residues 54-84 (NELGVYLCNLTVADLFYICSLPFWLQYVLQH). At 85 to 89 (DNWSH) the chain is on the extracellular side. The helical transmembrane segment at 90–125 (GDLSCQVCGILLYENIYISVGFLCCISVDRYLAVAH) threads the bilayer. Over 126-133 (PFRFHQFR) the chain is Cytoplasmic. A helical transmembrane segment spans residues 134–160 (TLKAAVGVSVVIWAKELLTSIYFLMHE). The Extracellular segment spans residues 161–176 (EVIEDENQHRVCFEHY). An extracellular loop 2 (ECL2) region spans residues 161–176 (EVIEDENQHRVCFEHY). A helical membrane pass occupies residues 177–214 (PIQAWQRAINYYRFLVGFLFPICLLLASYQGILRAVRR). Residues 215–218 (SHGT) are Cytoplasmic-facing. The chain crosses the membrane as a helical span at residues 219-254 (QKSRKDQIQRLVLSTVVIFLACFLPYHVLLLVRSVW). Residues 255–260 (EASCDF) lie on the Extracellular side of the membrane. The helical transmembrane segment at 261–289 (AKGVFNAYHFSLLLTSFNCVADPVLYCFV) threads the bilayer. Residues 290-365 (SETTHRDLAR…SGGFPTGRLA (76 aa)) lie on the Cytoplasmic side of the membrane. Residues 345-365 (HPAFQTPNSPGSGGFPTGRLA) form a disordered region. Over residues 355 to 365 (GSGGFPTGRLA) the composition is skewed to gly residues.

The protein belongs to the G-protein coupled receptor 1 family. As to expression, found at low level in a wide range of tissues, but significantly expressed in lung, kidney, bone and nervous system.

It is found in the cell membrane. With respect to regulation, activated by a network of residues that connects an extracellular-facing cavity to Glu-149, a conserved charged residue buried in the transmembrane core of the receptor. Protonation likely drives conformational changes in extracellular loop 2 (ECL2), which stabilizes movement of transmembrane 3 (TM3) and a series of rearrangements that connect the extracellular-facing cavity to Glu-149, a residue only conserved in proton-sensing G-protein coupled receptors. Activated in an allosteric manner by divalent metal ions at the extracellular surface following the order: Cd(2+) &gt; Co(2+) &gt; Ni(2+) &gt; Zn(2+) &gt; Fe(2+) &gt; Ca(2+) &gt; Mg(2+). Activated by the benzodiazepine drug lorazepam, a non-selective GPR68 positive allosteric modulator. Activated by ogerin (ZINC67740571), a selective GPR68 positive allosteric modulator. Activated by small molecule MS48107, a selective positive allosteric modulator. Inhibited by small molecule ogremorphin, inducing ferroptosis in cancer cells. Proton-sensing G-protein coupled receptor activated by extracellular pH, which is required to monitor pH changes and generate adaptive reactions. The receptor is almost silent at pH 7.8 but fully activated at pH 6.8. Ligand binding causes a conformation change that triggers signaling via guanine nucleotide-binding proteins (G proteins) and modulates the activity of downstream effectors, such as phospholipase C. GPR68 is mainly coupled to G(q) G proteins and mediates production of diacylglycerol (DAG) and inositol 1,4,5-trisphosphate (IP3). Acts as a key mechanosensor of fluid shear stress and membrane stretch. Expressed in endothelial cells of small-diameter resistance arteries, where it mediates flow-induced dilation in response to shear stress. May represents an osteoblastic pH sensor regulating cell-mediated responses to acidosis in bone. Acts as a regulator of calcium-sensing receptor CASR in a seesaw manner: GPR68-mediated signaling inhibits CASR signaling in response to protons, while CASR inhibits GPR68 in presence of extracellular calcium. In Homo sapiens (Human), this protein is G-protein coupled receptor 68.